The primary structure comprises 453 residues: tRNA-2-methylthio-N(6)-dimethylallyladenosine synthase (453 aa).

An MTTase N-terminal domain is found at 11 to 131; sequence KSFHVKSFGC…LPQLVADAAE (121 aa). [4Fe-4S] cluster contacts are provided by Cys20, Cys56, Cys94, Cys167, Cys171, and Cys174. One can recognise a Radical SAM core domain in the interval 153 to 385; the sequence is RRQGPTAFLT…QALLNEQQHR (233 aa). The region spanning 388 to 449 is the TRAM domain; sequence LATVGKRCEV…PNSLSGALVE (62 aa).

The protein belongs to the methylthiotransferase family. MiaB subfamily. As to quaternary structure, monomer. Requires [4Fe-4S] cluster as cofactor.

The protein resides in the cytoplasm. It carries out the reaction N(6)-dimethylallyladenosine(37) in tRNA + (sulfur carrier)-SH + AH2 + 2 S-adenosyl-L-methionine = 2-methylsulfanyl-N(6)-dimethylallyladenosine(37) in tRNA + (sulfur carrier)-H + 5'-deoxyadenosine + L-methionine + A + S-adenosyl-L-homocysteine + 2 H(+). Functionally, catalyzes the methylthiolation of N6-(dimethylallyl)adenosine (i(6)A), leading to the formation of 2-methylthio-N6-(dimethylallyl)adenosine (ms(2)i(6)A) at position 37 in tRNAs that read codons beginning with uridine. The protein is tRNA-2-methylthio-N(6)-dimethylallyladenosine synthase of Rhizorhabdus wittichii (strain DSM 6014 / CCUG 31198 / JCM 15750 / NBRC 105917 / EY 4224 / RW1) (Sphingomonas wittichii).